A 682-amino-acid chain; its full sequence is Methionine--tRNA ligase (682 aa).

The 'HIGH' region motif lies at Pro-15–His-25. Positions 146, 149, 159, and 162 each coordinate Zn(2+). The 'KMSKS' region motif lies at Lys-331–Ser-335. Lys-334 contributes to the ATP binding site. A tRNA-binding domain is found at Asp-580–Lys-682.

This sequence belongs to the class-I aminoacyl-tRNA synthetase family. MetG type 1 subfamily. As to quaternary structure, homodimer. Zn(2+) is required as a cofactor.

It localises to the cytoplasm. It catalyses the reaction tRNA(Met) + L-methionine + ATP = L-methionyl-tRNA(Met) + AMP + diphosphate. Its function is as follows. Is required not only for elongation of protein synthesis but also for the initiation of all mRNA translation through initiator tRNA(fMet) aminoacylation. The chain is Methionine--tRNA ligase from Haemophilus influenzae (strain PittEE).